A 533-amino-acid chain; its full sequence is Probable protein kinase UbiB (533 aa).

Residues 24 to 44 form a helical membrane-spanning segment; that stretch reads LILELPMLPWWLRLLGATLPW. The Protein kinase domain maps to 126–494; that stretch reads RFEREPLASA…WKGSRHDWLG (369 aa). ATP contacts are provided by residues 132–140 and K154; that span reads LASASVAQV. The Proton acceptor role is filled by D289. The chain crosses the membrane as a helical span at residues 510-530; it reads LGQQLEAWPAWVMLAGGVFLI.

This sequence belongs to the ABC1 family. UbiB subfamily.

The protein resides in the cell inner membrane. The protein operates within cofactor biosynthesis; ubiquinone biosynthesis [regulation]. Is probably a protein kinase regulator of UbiI activity which is involved in aerobic coenzyme Q (ubiquinone) biosynthesis. The protein is Probable protein kinase UbiB of Pseudomonas aeruginosa (strain UCBPP-PA14).